We begin with the raw amino-acid sequence, 349 residues long: Protein-glutamate methylesterase/protein-glutamine glutaminase (349 aa).

The region spanning 5–122 is the Response regulatory domain; that stretch reads RVLCVDDSAL…REGMLAYSEL (118 aa). Residue Asp-56 is modified to 4-aspartylphosphate. Residues 152–344 form the CheB-type methylesterase domain; it reads LLSSEKLIAI…QRMLAQISSG (193 aa). Active-site residues include Ser-164, His-190, and Asp-286.

Belongs to the CheB family. In terms of processing, phosphorylated by CheA. Phosphorylation of the N-terminal regulatory domain activates the methylesterase activity.

The protein resides in the cytoplasm. It catalyses the reaction [protein]-L-glutamate 5-O-methyl ester + H2O = L-glutamyl-[protein] + methanol + H(+). It carries out the reaction L-glutaminyl-[protein] + H2O = L-glutamyl-[protein] + NH4(+). Its function is as follows. Involved in chemotaxis. Part of a chemotaxis signal transduction system that modulates chemotaxis in response to various stimuli. Catalyzes the demethylation of specific methylglutamate residues introduced into the chemoreceptors (methyl-accepting chemotaxis proteins or MCP) by CheR. Also mediates the irreversible deamidation of specific glutamine residues to glutamic acid. The chain is Protein-glutamate methylesterase/protein-glutamine glutaminase from Yersinia pseudotuberculosis serotype I (strain IP32953).